Here is a 197-residue protein sequence, read N- to C-terminus: ATP-dependent Clp protease proteolytic subunit 1 (197 aa).

The active-site Nucleophile is Ser-99. His-124 is a catalytic residue.

It belongs to the peptidase S14 family. In terms of assembly, fourteen ClpP subunits assemble into 2 heptameric rings which stack back to back to give a disk-like structure with a central cavity, resembling the structure of eukaryotic proteasomes.

It localises to the cytoplasm. The catalysed reaction is Hydrolysis of proteins to small peptides in the presence of ATP and magnesium. alpha-casein is the usual test substrate. In the absence of ATP, only oligopeptides shorter than five residues are hydrolyzed (such as succinyl-Leu-Tyr-|-NHMec, and Leu-Tyr-Leu-|-Tyr-Trp, in which cleavage of the -Tyr-|-Leu- and -Tyr-|-Trp bonds also occurs).. Functionally, cleaves peptides in various proteins in a process that requires ATP hydrolysis. Has a chymotrypsin-like activity. Plays a major role in the degradation of misfolded proteins. This chain is ATP-dependent Clp protease proteolytic subunit 1, found in Treponema denticola (strain ATCC 35405 / DSM 14222 / CIP 103919 / JCM 8153 / KCTC 15104).